The sequence spans 447 residues: Protein TIC 40, chloroplastic (447 aa).

The transit peptide at 1–43 directs the protein to the chloroplast; it reads MENLTLVSCSASSPKLLIGCNFTSSLKNPTGFSRRTPNIVLRC. Residues 44–76 constitute a chloroplast; inner membrane transit peptide; that stretch reads SKISASAQSQSPSSRPENTGEIVVVKQRSKAFA. Over 77–104 the chain is Chloroplast intermembrane; it reads SIFSSSRDQQTTSVASPSVPVPPPSSST. A helical membrane pass occupies residues 105–125; it reads IGSPLFWIGVGVGLSALFSYV. The Stromal segment spans residues 126–447; that stretch reads TSNLKKYAMQ…ISQLFPGMTG (322 aa). Residues 148-160 are compositionally biased toward low complexity; the sequence is QNSQFNNSGFPSG. 2 disordered regions span residues 148-214 and 231-261; these read QNSQ…DIEV and KNYAFEDISPEETTKESPFSNYAEVSETNSP. The segment covering 161 to 171 has biased composition (pro residues); that stretch reads SPFPFPFPPQT. Residues 172–186 are compositionally biased toward low complexity; it reads SPASSPFQSQSQSSG. STI1 domains follow at residues 310 to 344 and 386 to 425; these read DPTVQKMVYPYLPEEMRNPETFKWMLKNPQYRQQL and PEEVISKIMENPDVAMAFQNPRVQAALMECSENPMNIMKY.

In terms of assembly, part of the Tic complex. Interacts with HSP93, TIC110 and LTD. In terms of tissue distribution, expressed in seedlings, flowers, leaves, stems and roots.

The protein localises to the plastid. It is found in the chloroplast inner membrane. Its function is as follows. Involved in protein precursor import into chloroplasts. Part of the motor complex consisting of a co-chaperone (TIC40) and a chaperone (HSP93) associated with the import channel (TIC110). Causes the release of bound transit peptides from TIC110 and stimulates ATP hydrolysis by HSP93. Involved in reinsertion of proteins from the chloroplast stroma into the inner membrane. This Arabidopsis thaliana (Mouse-ear cress) protein is Protein TIC 40, chloroplastic (TIC40).